Reading from the N-terminus, the 132-residue chain is S-adenosylmethionine decarboxylase proenzyme (132 aa).

The active-site Schiff-base intermediate with substrate; via pyruvic acid is Ser65. Ser65 is subject to Pyruvic acid (Ser); by autocatalysis. The Proton acceptor; for processing activity role is filled by His70. Cys85 serves as the catalytic Proton donor; for catalytic activity.

This sequence belongs to the prokaryotic AdoMetDC family. Type 1 subfamily. In terms of assembly, heterotetramer of two alpha and two beta chains arranged as a dimer of alpha/beta heterodimers. Pyruvate is required as a cofactor. Post-translationally, is synthesized initially as an inactive proenzyme. Formation of the active enzyme involves a self-maturation process in which the active site pyruvoyl group is generated from an internal serine residue via an autocatalytic post-translational modification. Two non-identical subunits are generated from the proenzyme in this reaction, and the pyruvate is formed at the N-terminus of the alpha chain, which is derived from the carboxyl end of the proenzyme. The post-translation cleavage follows an unusual pathway, termed non-hydrolytic serinolysis, in which the side chain hydroxyl group of the serine supplies its oxygen atom to form the C-terminus of the beta chain, while the remainder of the serine residue undergoes an oxidative deamination to produce ammonia and the pyruvoyl group blocking the N-terminus of the alpha chain.

The enzyme catalyses S-adenosyl-L-methionine + H(+) = S-adenosyl 3-(methylsulfanyl)propylamine + CO2. Its pathway is amine and polyamine biosynthesis; S-adenosylmethioninamine biosynthesis; S-adenosylmethioninamine from S-adenosyl-L-methionine: step 1/1. Functionally, catalyzes the decarboxylation of S-adenosylmethionine to S-adenosylmethioninamine (dcAdoMet), the propylamine donor required for the synthesis of the polyamines spermine and spermidine from the diamine putrescine. The chain is S-adenosylmethionine decarboxylase proenzyme from Symbiobacterium thermophilum (strain DSM 24528 / JCM 14929 / IAM 14863 / T).